Consider the following 493-residue polypeptide: Rho guanine nucleotide exchange factor 9 (493 aa).

An SH3 domain is found at 15 to 74; the sequence is DSIVSAEAVWDHVTMANRGVAFKAGDVIKVLDASNKDWWWGQIDDEEGWFPASFVRLWVN. The interaction with GPHN stretch occupies residues 107–117; that stretch reads RDQMRANVINE. The DH domain maps to 110–294; it reads MRANVINEIM…RNVTQQINER (185 aa). In terms of domain architecture, PH spans 325–432; that stretch reads ELIYTGEMAW…WLRAFREERK (108 aa). Residues 453 to 473 are disordered; the sequence is AMTVRKASKQKGRVGEEENQS.

As to quaternary structure, interacts with GPHN. In terms of tissue distribution, detected in brain, throughout the gray matter. Detected at low levels in heart and skeletal muscle.

The protein localises to the cytoplasm. It localises to the postsynaptic density. In terms of biological role, acts as a guanine nucleotide exchange factor (GEF) for CDC42. Promotes formation of GPHN clusters. This Rattus norvegicus (Rat) protein is Rho guanine nucleotide exchange factor 9 (Arhgef9).